We begin with the raw amino-acid sequence, 474 residues long: tRNA-2-methylthio-N(6)-dimethylallyladenosine synthase (474 aa).

In terms of domain architecture, MTTase N-terminal spans 3 to 120 (QKLHIKTWGC…LPEMINQIRG (118 aa)). [4Fe-4S] cluster-binding residues include Cys-12, Cys-49, Cys-83, Cys-157, Cys-161, and Cys-164. The region spanning 143-375 (RAEGPTAFVS…QERINQQAAQ (233 aa)) is the Radical SAM core domain. One can recognise a TRAM domain in the interval 378 to 441 (RRMLGTEQRV…TNSLRGEVVR (64 aa)).

Belongs to the methylthiotransferase family. MiaB subfamily. Monomer. Requires [4Fe-4S] cluster as cofactor.

The protein resides in the cytoplasm. It catalyses the reaction N(6)-dimethylallyladenosine(37) in tRNA + (sulfur carrier)-SH + AH2 + 2 S-adenosyl-L-methionine = 2-methylsulfanyl-N(6)-dimethylallyladenosine(37) in tRNA + (sulfur carrier)-H + 5'-deoxyadenosine + L-methionine + A + S-adenosyl-L-homocysteine + 2 H(+). In terms of biological role, catalyzes the methylthiolation of N6-(dimethylallyl)adenosine (i(6)A), leading to the formation of 2-methylthio-N6-(dimethylallyl)adenosine (ms(2)i(6)A) at position 37 in tRNAs that read codons beginning with uridine. The protein is tRNA-2-methylthio-N(6)-dimethylallyladenosine synthase of Haemophilus influenzae (strain PittEE).